The following is a 59-amino-acid chain: Conotoxin Ts-03 (59 aa).

Residues 1-19 form the signal peptide; that stretch reads MRCLPVFIILLLLIPSAAS. Residues 20-47 constitute a propeptide that is removed on maturation; that stretch reads VAQPKTKDDVALASFYDNAKRTLQRHWA.

This sequence belongs to the conotoxin T superfamily. Contains 2 disulfide bonds that can be either 'C1-C3, C2-C4' or 'C1-C4, C2-C3', since these disulfide connectivities have been observed for conotoxins with cysteine framework V (for examples, see AC P0DQQ7 and AC P81755). In terms of tissue distribution, expressed by the venom duct.

The protein resides in the secreted. The protein is Conotoxin Ts-03 of Conus tessulatus (Tessellate cone).